A 44-amino-acid chain; its full sequence is Photosystem I reaction center subunit IX (44 aa).

Residues 9 to 29 (WFRSAPVVATIWIVLTAGILV) form a helical membrane-spanning segment.

It belongs to the PsaJ family.

It localises to the cellular thylakoid membrane. May help in the organization of the PsaE and PsaF subunits. This Prochlorococcus marinus (strain MIT 9211) protein is Photosystem I reaction center subunit IX.